Here is a 397-residue protein sequence, read N- to C-terminus: 16-O-methyltransferase bsc6 (397 aa).

Asp-262 provides a ligand contact to S-adenosyl-L-methionine. His-302 serves as the catalytic Proton acceptor.

The protein belongs to the class I-like SAM-binding methyltransferase superfamily. Cation-independent O-methyltransferase family. The cofactor is S-adenosyl-L-methionine.

Its pathway is mycotoxin biosynthesis. Its function is as follows. 16-O-methyltransferase; part of the gene cluster that mediates the biosynthesis of the diterpene glucoside brassicicene C. In the first step of the brassicicene C biosynthesis, the bifunctional diterpene synthase bsc8 that possesses both prenyl transferase and terpene cyclase activity, converts isopentenyl diphosphate and dimethylallyl diphosphate into geranylgeranyl diphosphate (GGDP) that is further converted into fusicocca-2,10(14)-diene, the first precursor for brassicicene C. Fusicocca-2,10(14)-diene is then substrate of cytochrome P450 monooxygenase bsc1 for hydroxylation at the C-8 position. Oxidation at C-16 position to aldehyde is then catalyzed by the cytochrome P450 monooyxygenase bsc7, yielding fusicocca-2,10(14)-diene-8-beta,16-diol. Follows the isomerization of the double bond and reduction of aldehyde to alcohol catalyzed by the short-chain dehydrogenase/reductase bsc3 to yield the diol compound fusicocca-1,10(14)-diene-8 beta,16-diol. The next step is the oxidation at the C-3 position of fusicocca-2,10(14)-diene-8-beta,16-diol catalyzed by the alpha-ketoglutarate dependent dioxygenase bsc9, to produce a triol compound. Methylation of the hydroxy group at position 16 is performed by the methyltransferase bsc6. 16-O-methylation is followed by oxidation at the C-13 position to ketone and an alkyl shift of the methyl group leads to brassicicene C. Although the probable acetyltransferase bsc4 is included in the gene cluster, no acetylation reactions are necessary for brassicicene C biosynthesis. However, the fact that brassicicene E, which is a structurally related compound having an acetoxy group at position 12, was previously isolated from another strain of A.brassicicola suggests that the ATCC 96836 strain might also produce a small amount of brassicicene E. In Alternaria brassicicola (Dark leaf spot agent), this protein is 16-O-methyltransferase bsc6.